A 74-amino-acid polypeptide reads, in one-letter code: Large ribosomal subunit protein bL27c (74 aa).

The protein belongs to the bacterial ribosomal protein bL27 family.

The protein localises to the plastid. It localises to the chloroplast. This Pleurochrysis haptonemofera (Unicellular marine alga) protein is Large ribosomal subunit protein bL27c (rpl27).